Here is a 697-residue protein sequence, read N- to C-terminus: Potassium-transporting ATPase ATP-binding subunit (697 aa).

The next 4 membrane-spanning stretches (helical) occupy residues 55 to 75 (PIMF…FLPS), 79 to 99 (SIPG…VLFA), 245 to 265 (LTLI…YLGF), and 271 to 291 (VLVA…LSAI). Aspartate 324 (4-aspartylphosphate intermediate) is an active-site residue. Residues aspartate 361, glutamate 365, 393 to 400 (FKAETRMS), and lysine 412 each bind ATP. 2 residues coordinate Mg(2+): aspartate 535 and aspartate 539. The next 3 helical transmembrane spans lie at 605-625 (FAII…LNIM), 633-653 (AILS…PLAM), and 677-697 (GGVI…GLFI).

It belongs to the cation transport ATPase (P-type) (TC 3.A.3) family. Type IA subfamily. In terms of assembly, the system is composed of three essential subunits: KdpA, KdpB and KdpC.

The protein localises to the cell membrane. It carries out the reaction K(+)(out) + ATP + H2O = K(+)(in) + ADP + phosphate + H(+). Its function is as follows. Part of the high-affinity ATP-driven potassium transport (or Kdp) system, which catalyzes the hydrolysis of ATP coupled with the electrogenic transport of potassium into the cytoplasm. This subunit is responsible for energy coupling to the transport system and for the release of the potassium ions to the cytoplasm. The chain is Potassium-transporting ATPase ATP-binding subunit from Bacillus cereus (strain B4264).